The following is a 450-amino-acid chain: Interferon-induced protein 75 (450 aa).

One can recognise an HSR domain in the interval 1-108 (MFTLTKALEK…IFRSFRNVGY (108 aa)). 2 disordered regions span residues 131–156 (CSLQTLLPPPRPQLSLPSHLSSAPRV) and 170–225 (LDEQ…VKDD). Residues 143 to 154 (QLSLPSHLSSAP) are compositionally biased toward low complexity. Phosphoserine is present on residues S175 and S177. Basic and acidic residues predominate over residues 197-212 (SRDHQRKDKEDSREMP). A Phosphoserine modification is found at S226. 2 disordered regions span residues 238 to 283 (VLCT…HGVQ) and 318 to 360 (AQTS…KNDA). The span at 245-267 (KKARRKKRLNWSNSKRGRQKKKP) shows a compositional bias: basic residues. The short motif at 251 to 266 (KRLNWSNSKRGRQKKK) is the Nuclear localization signal element. The span at 343-353 (TSTAGKTTQVP) shows a compositional bias: polar residues. An SAND domain is found at 358 to 439 (NDAVDFLSPT…RQLEQKGLLF (82 aa)).

Its subcellular location is the nucleus. The sequence is that of Interferon-induced protein 75 (Ifi75) from Mus caroli (Ryukyu mouse).